Reading from the N-terminus, the 271-residue chain is Orotidine 5'-phosphate decarboxylase (271 aa).

Lys95 serves as the catalytic Proton donor.

This sequence belongs to the OMP decarboxylase family. Type 2 subfamily.

It carries out the reaction orotidine 5'-phosphate + H(+) = UMP + CO2. Its pathway is pyrimidine metabolism; UMP biosynthesis via de novo pathway; UMP from orotate: step 2/2. This Aromatoleum aromaticum (strain DSM 19018 / LMG 30748 / EbN1) (Azoarcus sp. (strain EbN1)) protein is Orotidine 5'-phosphate decarboxylase.